Reading from the N-terminus, the 59-residue chain is Large ribosomal subunit protein uL30 (59 aa).

This sequence belongs to the universal ribosomal protein uL30 family. As to quaternary structure, part of the 50S ribosomal subunit.

This Psychrobacter arcticus (strain DSM 17307 / VKM B-2377 / 273-4) protein is Large ribosomal subunit protein uL30.